A 209-amino-acid chain; its full sequence is Thiamine-phosphate synthase (209 aa).

4-amino-2-methyl-5-(diphosphooxymethyl)pyrimidine-binding positions include Gln-38–Lys-42 and Asn-70. Residues Asp-71 and Asp-89 each coordinate Mg(2+). Residue Thr-108 participates in 4-amino-2-methyl-5-(diphosphooxymethyl)pyrimidine binding. Ser-135–Thr-137 is a 2-[(2R,5Z)-2-carboxy-4-methylthiazol-5(2H)-ylidene]ethyl phosphate binding site. Position 138 (Lys-138) interacts with 4-amino-2-methyl-5-(diphosphooxymethyl)pyrimidine. 2-[(2R,5Z)-2-carboxy-4-methylthiazol-5(2H)-ylidene]ethyl phosphate is bound at residue Gly-165.

This sequence belongs to the thiamine-phosphate synthase family. The cofactor is Mg(2+).

It carries out the reaction 2-[(2R,5Z)-2-carboxy-4-methylthiazol-5(2H)-ylidene]ethyl phosphate + 4-amino-2-methyl-5-(diphosphooxymethyl)pyrimidine + 2 H(+) = thiamine phosphate + CO2 + diphosphate. The catalysed reaction is 2-(2-carboxy-4-methylthiazol-5-yl)ethyl phosphate + 4-amino-2-methyl-5-(diphosphooxymethyl)pyrimidine + 2 H(+) = thiamine phosphate + CO2 + diphosphate. The enzyme catalyses 4-methyl-5-(2-phosphooxyethyl)-thiazole + 4-amino-2-methyl-5-(diphosphooxymethyl)pyrimidine + H(+) = thiamine phosphate + diphosphate. It functions in the pathway cofactor biosynthesis; thiamine diphosphate biosynthesis; thiamine phosphate from 4-amino-2-methyl-5-diphosphomethylpyrimidine and 4-methyl-5-(2-phosphoethyl)-thiazole: step 1/1. Condenses 4-methyl-5-(beta-hydroxyethyl)thiazole monophosphate (THZ-P) and 2-methyl-4-amino-5-hydroxymethyl pyrimidine pyrophosphate (HMP-PP) to form thiamine monophosphate (TMP). The sequence is that of Thiamine-phosphate synthase from Ectopseudomonas mendocina (strain ymp) (Pseudomonas mendocina).